The following is a 327-amino-acid chain: Phenylalanine--tRNA ligase alpha subunit (327 aa).

Glu252 is a Mg(2+) binding site.

It belongs to the class-II aminoacyl-tRNA synthetase family. Phe-tRNA synthetase alpha subunit type 1 subfamily. Tetramer of two alpha and two beta subunits. Mg(2+) serves as cofactor.

It is found in the cytoplasm. The enzyme catalyses tRNA(Phe) + L-phenylalanine + ATP = L-phenylalanyl-tRNA(Phe) + AMP + diphosphate + H(+). This chain is Phenylalanine--tRNA ligase alpha subunit, found in Pectobacterium atrosepticum (strain SCRI 1043 / ATCC BAA-672) (Erwinia carotovora subsp. atroseptica).